Reading from the N-terminus, the 393-residue chain is S-adenosylmethionine synthase (393 aa).

Position 16 (His16) interacts with ATP. A Mg(2+)-binding site is contributed by Asp18. Glu44 is a binding site for K(+). 2 residues coordinate L-methionine: Glu57 and Gln100. The interval 100–110 is flexible loop; it reads QSPDIVMGVDG. ATP-binding positions include 165–167, 231–232, Asp240, 246–247, and Lys267; these read DAK, RF, and RK. Asp240 provides a ligand contact to L-methionine. Lys271 serves as a coordination point for L-methionine.

This sequence belongs to the AdoMet synthase family. Homotetramer; dimer of dimers. Mg(2+) serves as cofactor. It depends on K(+) as a cofactor.

The protein localises to the cytoplasm. The catalysed reaction is L-methionine + ATP + H2O = S-adenosyl-L-methionine + phosphate + diphosphate. Its pathway is amino-acid biosynthesis; S-adenosyl-L-methionine biosynthesis; S-adenosyl-L-methionine from L-methionine: step 1/1. Its function is as follows. Catalyzes the formation of S-adenosylmethionine (AdoMet) from methionine and ATP. The overall synthetic reaction is composed of two sequential steps, AdoMet formation and the subsequent tripolyphosphate hydrolysis which occurs prior to release of AdoMet from the enzyme. This Coxiella burnetii (strain Dugway 5J108-111) protein is S-adenosylmethionine synthase.